The chain runs to 194 residues: Probable nicotinate-nucleotide adenylyltransferase (194 aa).

It belongs to the NadD family.

It carries out the reaction nicotinate beta-D-ribonucleotide + ATP + H(+) = deamido-NAD(+) + diphosphate. It participates in cofactor biosynthesis; NAD(+) biosynthesis; deamido-NAD(+) from nicotinate D-ribonucleotide: step 1/1. Catalyzes the reversible adenylation of nicotinate mononucleotide (NaMN) to nicotinic acid adenine dinucleotide (NaAD). This Chlorobium luteolum (strain DSM 273 / BCRC 81028 / 2530) (Pelodictyon luteolum) protein is Probable nicotinate-nucleotide adenylyltransferase.